Consider the following 61-residue polypeptide: Beta-toxin Tce4 (61 aa).

The 61-residue stretch at 1 to 61 (KEGYLMDHEG…KVWEYATNRC (61 aa)) folds into the LCN-type CS-alpha/beta domain. 4 disulfide bridges follow: C11–C61, C15–C37, C23–C42, and C27–C44. C61 carries the post-translational modification Cysteine amide.

It belongs to the long (4 C-C) scorpion toxin superfamily. Sodium channel inhibitor family. Beta subfamily. Expressed by the venom gland.

It localises to the secreted. Functionally, beta toxins bind voltage-independently at site-4 of sodium channels (Nav) and shift the voltage of activation toward more negative potentials thereby affecting sodium channel activation and promoting spontaneous and repetitive firing. This chain is Beta-toxin Tce4, found in Tityus cerroazul (Scorpion).